Reading from the N-terminus, the 587-residue chain is Urease subunit alpha (587 aa).

A Urease domain is found at Gly-134–Thr-572. Ni(2+) is bound by residues His-139, His-141, and Lys-222. Lys-222 is modified (N6-carboxylysine). His-224 contacts substrate. His-251 and His-277 together coordinate Ni(2+). Catalysis depends on His-325, which acts as the Proton donor. Ni(2+) is bound at residue Asp-365.

Belongs to the metallo-dependent hydrolases superfamily. Urease alpha subunit family. As to quaternary structure, heterotrimer of UreA (gamma), UreB (beta) and UreC (alpha) subunits. Three heterotrimers associate to form the active enzyme. It depends on Ni cation as a cofactor. In terms of processing, carboxylation allows a single lysine to coordinate two nickel ions.

The protein localises to the cytoplasm. The enzyme catalyses urea + 2 H2O + H(+) = hydrogencarbonate + 2 NH4(+). Its pathway is nitrogen metabolism; urea degradation; CO(2) and NH(3) from urea (urease route): step 1/1. The polypeptide is Urease subunit alpha (Clostridium perfringens).